The sequence spans 277 residues: Probable cytochrome c oxidase subunit 3 (277 aa).

6 consecutive transmembrane segments (helical) span residues Pro-20–Met-40, Phe-45–Trp-65, Ile-88–Phe-108, Cys-173–Tyr-193, Phe-211–Val-231, and Ala-255–Phe-275.

It belongs to the cytochrome c oxidase subunit 3 family.

The protein resides in the cell membrane. It carries out the reaction 4 Fe(II)-[cytochrome c] + O2 + 8 H(+)(in) = 4 Fe(III)-[cytochrome c] + 2 H2O + 4 H(+)(out). The polypeptide is Probable cytochrome c oxidase subunit 3 (ctaE) (Rickettsia bellii (strain RML369-C)).